A 943-amino-acid chain; its full sequence is Nuclear receptor coactivator 7 (943 aa).

M1 bears the N-acetylmethionine mark. Positions M1–Q15 are enriched in basic and acidic residues. The stretch at M1–E32 forms a coiled coil. The tract at residues M1–R83 is disordered. S92 is subject to Phosphoserine. The LysM domain maps to M117–V160. The residue at position 137 (T137) is a Phosphothreonine. Positions T169–E189 are disordered. Over residues P177–D187 the composition is skewed to polar residues. Phosphoserine is present on residues S182, S186, S211, S212, and S214. Positions E334–D369 are disordered. The span at K349–D369 shows a compositional bias: basic and acidic residues. Residues S442, S498, and S500 each carry the phosphoserine modification. Over residues E486–G499 the composition is skewed to basic and acidic residues. 2 disordered regions span residues E486 to S507 and L543 to P576. Residues A782–E943 enclose the TLDc domain.

This sequence belongs to the OXR1 family. In terms of assembly, interacts with ESR1, ESR2A, ESR2B, THRB, PPARG and RARA in a ligand-inducible manner. Interacts with the heterodimer AHR-ARNT. In terms of tissue distribution, highly expressed in brain and kidney. Weakly expressed in mammary gland, lung and testis. In brain, expression is found in neurons of cerebral cortex, thalamus, hypothalamus, hippocampus, cerebellum, striatum and choroid plexus.

The protein localises to the nucleus. Its function is as follows. Enhances the transcriptional activities of several nuclear receptors. Involved in the coactivation of different nuclear receptors, such as ESR1, THRB, PPARG and RARA. The polypeptide is Nuclear receptor coactivator 7 (Ncoa7) (Mus musculus (Mouse)).